The sequence spans 741 residues: Protein lin-54 homolog (741 aa).

The CRC domain occupies 513-626 (PRKPCNCTKS…KCIGCKNFEE (114 aa)). A DNA-binding region spans residues 515–528 (KPCNCTKSLCLKLY). The Zn(2+) site is built by C517, C519, C524, C529, C531, C538, C541, C543, and C546. Positions 575–588 (IGKGKEGESDRRHS) are linker. Zn(2+) contacts are provided by C591, C593, C598, C603, C605, C612, C616, C618, and C621. A DNA-binding region spans residues 591–604 (CNCKRSGCLKNYCE).

It belongs to the lin-54 family. Component of the DREAM complex.

It is found in the nucleus. In terms of biological role, component of the DREAM complex, a multiprotein complex that can both act as a transcription activator or repressor depending on the context. Specifically recognizes the consensus motif 5'-TTYRAA-3' in target DNA. The protein is Protein lin-54 homolog (lin54) of Xenopus tropicalis (Western clawed frog).